The sequence spans 130 residues: Lysozyme C (130 aa).

In terms of domain architecture, C-type lysozyme spans 1-130 (KIYERCELAR…LTPYIRGCGV (130 aa)). Disulfide bonds link C6-C128, C30-C116, C65-C81, and C77-C95. Catalysis depends on residues E35 and D53.

This sequence belongs to the glycosyl hydrolase 22 family. In terms of assembly, monomer.

The protein localises to the secreted. The enzyme catalyses Hydrolysis of (1-&gt;4)-beta-linkages between N-acetylmuramic acid and N-acetyl-D-glucosamine residues in a peptidoglycan and between N-acetyl-D-glucosamine residues in chitodextrins.. Lysozymes have primarily a bacteriolytic function; those in tissues and body fluids are associated with the monocyte-macrophage system and enhance the activity of immunoagents. The polypeptide is Lysozyme C (LYZ) (Oryctolagus cuniculus (Rabbit)).